A 174-amino-acid polypeptide reads, in one-letter code: Chorismate pyruvate-lyase (174 aa).

4 residues coordinate substrate: methionine 36, arginine 78, leucine 116, and glutamate 157.

It belongs to the UbiC family. As to quaternary structure, monomer.

The protein localises to the cytoplasm. It catalyses the reaction chorismate = 4-hydroxybenzoate + pyruvate. It functions in the pathway cofactor biosynthesis; ubiquinone biosynthesis. In terms of biological role, removes the pyruvyl group from chorismate, with concomitant aromatization of the ring, to provide 4-hydroxybenzoate (4HB) for the ubiquinone pathway. This Serratia proteamaculans (strain 568) protein is Chorismate pyruvate-lyase.